We begin with the raw amino-acid sequence, 319 residues long: Histone-lysine N-methyltransferase set5 (319 aa).

The 138-residue stretch at 4 to 141 folds into the SET domain; it reads YETEIYKVVP…AGEEILTTYI (138 aa). Serine 316 bears the Phosphoserine mark. A Phosphothreonine modification is found at threonine 318.

Belongs to the class V-like SAM-binding methyltransferase superfamily.

The protein localises to the nucleus. Its subcellular location is the chromosome. It localises to the cytoplasm. It catalyses the reaction L-lysyl-[histone] + S-adenosyl-L-methionine = N(6)-methyl-L-lysyl-[histone] + S-adenosyl-L-homocysteine + H(+). Functionally, histone methyltransferase that monomethylates 'Lys-5', 'Lys-8' and 'Lys-12' of histone H4 (H4K5me1, H4K8me1 and H4K12me1, respectively), thereby controlling gene expression and remodeling chromatin structures. Monomethylation of 'Lys-5' of histone H4 (H4K5me1) is required for subsequent acetylation and formation of N6-acetyl-N6-methyllysine (H4K5acme). The polypeptide is Histone-lysine N-methyltransferase set5 (set5) (Schizosaccharomyces pombe (strain 972 / ATCC 24843) (Fission yeast)).